The following is a 486-amino-acid chain: N-succinylglutamate 5-semialdehyde dehydrogenase (486 aa).

220-225 (GSSRTG) is a binding site for NAD(+). Residues Glu243 and Cys277 contribute to the active site.

The protein belongs to the aldehyde dehydrogenase family. AstD subfamily.

The catalysed reaction is N-succinyl-L-glutamate 5-semialdehyde + NAD(+) + H2O = N-succinyl-L-glutamate + NADH + 2 H(+). It participates in amino-acid degradation; L-arginine degradation via AST pathway; L-glutamate and succinate from L-arginine: step 4/5. Catalyzes the NAD-dependent reduction of succinylglutamate semialdehyde into succinylglutamate. The protein is N-succinylglutamate 5-semialdehyde dehydrogenase of Shewanella baltica (strain OS155 / ATCC BAA-1091).